Reading from the N-terminus, the 208-residue chain is High frequency lysogenization protein HflD homolog (208 aa).

The protein belongs to the HflD family.

Its subcellular location is the cytoplasm. The protein resides in the cell inner membrane. The chain is High frequency lysogenization protein HflD homolog from Photorhabdus laumondii subsp. laumondii (strain DSM 15139 / CIP 105565 / TT01) (Photorhabdus luminescens subsp. laumondii).